A 352-amino-acid polypeptide reads, in one-letter code: Phosphoribosylformylglycinamidine cyclo-ligase (352 aa).

Belongs to the AIR synthase family.

It localises to the cytoplasm. It catalyses the reaction 2-formamido-N(1)-(5-O-phospho-beta-D-ribosyl)acetamidine + ATP = 5-amino-1-(5-phospho-beta-D-ribosyl)imidazole + ADP + phosphate + H(+). It functions in the pathway purine metabolism; IMP biosynthesis via de novo pathway; 5-amino-1-(5-phospho-D-ribosyl)imidazole from N(2)-formyl-N(1)-(5-phospho-D-ribosyl)glycinamide: step 2/2. The polypeptide is Phosphoribosylformylglycinamidine cyclo-ligase (Pseudomonas syringae pv. tomato (strain ATCC BAA-871 / DC3000)).